Consider the following 240-residue polypeptide: Putative tyrosine phosphatase 067L (240 aa).

A Tyrosine-protein phosphatase domain is found at 3 to 151; the sequence is QASFFVADKA…EREWPLNPTQ (149 aa). Cys96 acts as the Phosphocysteine intermediate in catalysis.

It belongs to the protein-tyrosine phosphatase family.

The enzyme catalyses O-phospho-L-tyrosyl-[protein] + H2O = L-tyrosyl-[protein] + phosphate. This is Putative tyrosine phosphatase 067L from Aedes vexans (Inland floodwater mosquito).